We begin with the raw amino-acid sequence, 486 residues long: MANYKGRGNVMIRSMLLGLYGIINIVCVNGTFINYKDALTKSLIFLEAQRSGKLPPNNRVPWRGDSALDDGKLVNVDLSGGYYDAGDNVKYGLPMAFTITTLAWSTITYEKELRATGELENARAAIRWGTDYFLKCASRKNRLYVQVGDPNADHQCWARPENMKTPRTVLEISDKVPGTEIAAEAAAAFAASSIVFRHVDHKYARRLLNKAKLLFKLAKSHKGTYDGECPFYCSNSGYNDELIWAATWLYKATRNHLYLSYLKFEAISAYVAEFSWDLKYAGAQILITKLIFEGHKGLDLYKQQADSFVCSNLPGSPYHQVFTTPGGMIHLRDGANSQYVTATAFLFSAYADILQKHNQKISCGSHQFDSTHLMAFAKKQIDYILGHNPQGRSYMVGFGPNPPKQAHHRGASVPMHEANAPLSCPLSFVKWYNKNVPNANELTGAILGGPDRQDKFQDLRWTSVYTEPCTYINSIAVGVLAKLAAA.

Residues 1–30 (MANYKGRGNVMIRSMLLGLYGIINIVCVNG) form the signal peptide. An N-linked (GlcNAc...) asparagine glycan is attached at asparagine 29. Aspartate 87 acts as the Nucleophile in catalysis. Residues histidine 407, aspartate 458, and glutamate 467 contribute to the active site.

Belongs to the glycosyl hydrolase 9 (cellulase E) family.

The protein resides in the secreted. It catalyses the reaction Endohydrolysis of (1-&gt;4)-beta-D-glucosidic linkages in cellulose, lichenin and cereal beta-D-glucans.. This Arabidopsis thaliana (Mouse-ear cress) protein is Endoglucanase 16.